The following is a 504-amino-acid chain: Maturase K (504 aa).

The protein belongs to the intron maturase 2 family. MatK subfamily.

It is found in the plastid. The protein localises to the chloroplast. In terms of biological role, usually encoded in the trnK tRNA gene intron. Probably assists in splicing its own and other chloroplast group II introns. The sequence is that of Maturase K from Chimaphila umbellata (Pipsissewa).